Here is a 340-residue protein sequence, read N- to C-terminus: MDESKRKALENALKAIEKEFGKGAVMRLGEMPKQQVDVIPTGSLALDLALGIGGIPRGRIVEIYGPESGGKTTLALTIIAQAQRRGGVAAFVDAEHALDPLYAQRLGVQVEDLLVSQPDTGEQALEIVELLARSGAVDVIVVDSVAALVPRAEIEGEMGDQHVGLQARLMSQALRKLTAVLAKSNTAAIFINQVREKVGVTYGNPETTPGGRALKFYASVRLDVRKSGQPIKVGNEAVGVKVRVKVVKNKLAPPFREAELEIYFGRGLDPVADLVNVAVAAGVIEKAGSWFSYGELRLGQGKEKAAEALRERPELLEEIRTKVLERAGEVVLAAGEDEGE.

65-72 provides a ligand contact to ATP; that stretch reads GPESGGKT.

Belongs to the RecA family.

The protein resides in the cytoplasm. In terms of biological role, can catalyze the hydrolysis of ATP in the presence of single-stranded DNA, the ATP-dependent uptake of single-stranded DNA by duplex DNA, and the ATP-dependent hybridization of homologous single-stranded DNAs. It interacts with LexA causing its activation and leading to its autocatalytic cleavage. The polypeptide is Protein RecA (Thermus thermophilus (strain ATCC BAA-163 / DSM 7039 / HB27)).